An 880-amino-acid chain; its full sequence is MEGGSVSDDTVTPMMAQYLEIKAQNPGAILFYRMGDFYEMFFDDAALAAEALDIALTKRGKHRGEDIAMCGVPIHAAEGYLLTLIRKGFRVAIAEQMEDPAEAKKRGSKSVVRREVVRLVTPGTLTEDTLLEARRHNYLCAFAEIRDEAALAWADISTGELSVTACPLPRLMPELARLAPRELLVADERELDWIEEVGCALTPLSRASFDSASAEKRLCALFGVGTLESFGNFTRAELSAMGALVDYLDLTQRGKLPLLRPPVRETVGGTVQIDAATRRNLEITQALAGGRDGSLLSAVDRTVTAPGARLLERRLSSPTRDLGLIHERLGAVRWLTEEPRLREEMRASLRRVPDMDRALSRLALDRAGPRDMAAIRAGLAQAQEIAQRMPAEAPALVTRALEALGGHEALVDLLDQALVAEPPLLARDGGFIAQGFDADLDETRRLRDEGRGVIASMQAGFIEVTGIQSLKIKHNNVLGYFIEVTSTHAEKMLSAPLSERFIHRQTTAGQVRFTTVELSELETRILNAGNRALDLEKMHFAALRTAILDLAGQIGRAARSLAELDLISAFADLAAIEDWTEPEIDDSRAFAIEAGRHPVVERALRRTGTPFVANHCDLSTGGTPAVWLITGPNMAGKSTFLRQNALIALLAQAGSFVPARRAHIGLVSQIFSRVGASDDLARGRSTFMVEMVETAAILNQADDRALVILDEIGRGTATWDGLSIAWATLEHLHDRNRCRALFATHYHEMTALAGKLKGVENATVAVKEWEGDVIFLHEVRRGAADRSYGVQVARLAGLPASVIERARTVLDALESGERESGGRRQTLIDDLPLFRAAPPPPAPAAPKTSPVEERLREIQPDDLSPREALKLLYDLRALLT.

631-638 (GPNMAGKS) serves as a coordination point for ATP. Positions 835 to 860 (RAAPPPPAPAAPKTSPVEERLREIQP) are disordered. Residues 850 to 860 (PVEERLREIQP) are compositionally biased toward basic and acidic residues.

Belongs to the DNA mismatch repair MutS family.

This protein is involved in the repair of mismatches in DNA. It is possible that it carries out the mismatch recognition step. This protein has a weak ATPase activity. This Cereibacter sphaeroides (strain ATCC 17029 / ATH 2.4.9) (Rhodobacter sphaeroides) protein is DNA mismatch repair protein MutS.